Consider the following 98-residue polypeptide: Large ribosomal subunit protein uL23 (98 aa).

Belongs to the universal ribosomal protein uL23 family. As to quaternary structure, part of the 50S ribosomal subunit. Contacts protein L29, and trigger factor when it is bound to the ribosome.

In terms of biological role, one of the early assembly proteins it binds 23S rRNA. One of the proteins that surrounds the polypeptide exit tunnel on the outside of the ribosome. Forms the main docking site for trigger factor binding to the ribosome. This is Large ribosomal subunit protein uL23 from Alcanivorax borkumensis (strain ATCC 700651 / DSM 11573 / NCIMB 13689 / SK2).